The sequence spans 576 residues: MSILLRPSSSPSLCSSLKLFRLSSPDSLIDAAVLRNRTKPSQSFRMEVVSSNSTCLSSISVGEDFPSEYEQWLPVPDPESRRRAGVLLHPTSFRGPHGIGDLGEEAFRFIDWLHSTGCSVWQVLPLVPPDEGGSPYAGQDANCGNTLLISLDELVKDGLLIKDELPQPIDADSVNYQTANKLKSPLITKAAKRLIDGNGELKSKLLDFRNDPSISCWLEDAAYFAAIDNTLNAYSWFEWPEPLKNRHLSALEAIYESQKEFIDLFIAKQFLFQRQWQKVREYARRQGVDIMGDMPIYVGYHSADVWANKKHFLLNKKGFPLLVSGVPPDLFSETGQLWGSPLYDWKAMESDQYSWWVNRIRRAQDLYDECRIDHFRGFAGFWAVPSEAKVAMVGRWKVGPGKSLFDAISKGVGKIKIIAEDLGVITKDVVELRKSIGAPGMAVLQFAFGGGADNPHLPHNHEVNQVVYSGTHDNDTIRGWWDTLDQEEKSKAMKYLSIAGEDDISWSVIQAAFSSTAQTAIIPMQDILGLGSSARMNTPATEVGNWGWRIPSSTSFDNLETESDRLRDLLSLYGRL.

The N-terminal 45 residues, Met1–Arg45, are a transit peptide targeting the chloroplast.

The protein belongs to the disproportionating enzyme family.

The protein localises to the plastid. It is found in the chloroplast. The protein resides in the amyloplast. It catalyses the reaction Transfers a segment of a (1-&gt;4)-alpha-D-glucan to a new position in an acceptor, which may be glucose or a (1-&gt;4)-alpha-D-glucan.. Chloroplastic alpha-glucanotransferase involved in maltotriose metabolism. Probably uses maltotriose as substrate to transfer a maltosyl unit from one molecule to another, resulting in glucose and maltopentaose. The latter can then be further metabolized to maltose and maltotriose by beta-amylase. Required for normal starch degradation in leaves. The chain is 4-alpha-glucanotransferase DPE1, chloroplastic/amyloplastic (DPE1) from Arabidopsis thaliana (Mouse-ear cress).